A 428-amino-acid polypeptide reads, in one-letter code: Histone deacetylase 3 (428 aa).

Residues 3–316 (KTVAYFYDPD…WTYETSLLVD (314 aa)) form a histone deacetylase region. 3 residues coordinate 1D-myo-inositol 1,4,5,6-tetrakisphosphate: H17, G21, and K25. H135 is a catalytic residue. The Zn(2+) site is built by D170, H172, and D259. R265 lines the 1D-myo-inositol 1,4,5,6-tetrakisphosphate pocket. Composition is skewed to basic and acidic residues over residues 386–405 (SYERTDEPDPEERGSEDNYS) and 415–428 (DGDHDNDKESDVEI). Residues 386 to 428 (SYERTDEPDPEERGSEDNYSRPEASNEFYDGDHDNDKESDVEI) form a disordered region.

It belongs to the histone deacetylase family. HD type 1 subfamily.

Its subcellular location is the nucleus. It localises to the chromosome. The protein localises to the cytoplasm. The protein resides in the cytosol. It catalyses the reaction N(6)-acetyl-L-lysyl-[histone] + H2O = L-lysyl-[histone] + acetate. The enzyme catalyses N(6)-acetyl-L-lysyl-[protein] + H2O = L-lysyl-[protein] + acetate. The catalysed reaction is N(6)-(2E)-butenoyl-L-lysyl-[protein] + H2O = (2E)-2-butenoate + L-lysyl-[protein]. It carries out the reaction N(6)-(2-hydroxyisobutanoyl)-L-lysyl-[protein] + H2O = 2-hydroxy-2-methylpropanoate + L-lysyl-[protein]. It catalyses the reaction N(6)-[(S)-lactoyl]-L-lysyl-[protein] + H2O = (S)-lactate + L-lysyl-[protein]. With respect to regulation, inositol tetraphosphate (1D-myo-inositol 1,4,5,6-tetrakisphosphate) promotes the histone deacetylase activity by acting as an intermolecular glue between hdac3 and N-Cor repressor complex components. Functionally, histone deacetylase that catalyzes the deacetylation of lysine residues on the N-terminal part of the core histones (H2A, H2B, H3 and H4), and some other non-histone substrates. Histone deacetylation gives a tag for epigenetic repression and plays an important role in transcriptional regulation, cell cycle progression and developmental events. Histone deacetylases act via the formation of large multiprotein complexes, such as N-Cor repressor complex, which activate the histone deacetylase activity. Participates in the BCL6 transcriptional repressor activity by deacetylating the H3 'Lys-27' (H3K27) on enhancer elements, antagonizing EP300 acetyltransferase activity and repressing proximal gene expression. Also functions as a deacetylase for non-histone targets. In addition to protein deacetylase activity, also acts as a protein-lysine deacylase by recognizing other acyl groups: catalyzes removal of (2E)-butenoyl (crotonyl), lactoyl (lactyl) and 2-hydroxyisobutanoyl (2-hydroxyisobutyryl) acyl groups from lysine residues, leading to protein decrotonylation, delactylation and de-2-hydroxyisobutyrylation, respectively. The chain is Histone deacetylase 3 (hdac3) from Xenopus tropicalis (Western clawed frog).